We begin with the raw amino-acid sequence, 102 residues long: Integration host factor subunit beta (102 aa).

Belongs to the bacterial histone-like protein family. In terms of assembly, heterodimer of an alpha and a beta chain.

Its function is as follows. This protein is one of the two subunits of integration host factor, a specific DNA-binding protein that functions in genetic recombination as well as in transcriptional and translational control. This Rhizobium radiobacter (Agrobacterium tumefaciens) protein is Integration host factor subunit beta (ihfB).